A 145-amino-acid chain; its full sequence is Transcription antitermination protein NusB (145 aa).

Belongs to the NusB family.

Involved in transcription antitermination. Required for transcription of ribosomal RNA (rRNA) genes. Binds specifically to the boxA antiterminator sequence of the ribosomal RNA (rrn) operons. This is Transcription antitermination protein NusB from Geobacter sp. (strain M21).